The sequence spans 340 residues: Cytochrome P450 monooxygenase cheG (340 aa).

The N-linked (GlcNAc...) asparagine glycan is linked to Asn-25. Residues 37–57 traverse the membrane as a helical segment; that stretch reads MLLGIPTVILSLTPAVLRLLI. Cys-283 serves as a coordination point for heme. A disordered region spans residues 308-340; that stretch reads LPPGQGKPEKGSMPNGSMSPDTKAKVLFRSRKL. N-linked (GlcNAc...) asparagine glycosylation is present at Asn-322.

It belongs to the cytochrome P450 family. Requires heme as cofactor.

It localises to the membrane. Its pathway is secondary metabolite biosynthesis. Functionally, cytochrome P450 monooxygenase; part of the gene cluster that mediates the biosynthesis of chaetoglobosin A which has a unique inhibitory activity against actin polymerization in mammalian cells. Chaetoglobosin A and its intermediates are involved in the morphological differentiation of C.globosum. The first step of the pathway is the synthesis of prochaetoglobosin I via condensation of one acetyl-CoA, 8 malonyl-CoA, and a L-tryptophan molecule by the PKS-NRPS hybrid synthetase cheA, followed by reduction of backbone double bond to install desired geometry by the enoyl reductase cheB. Further multiple oxidation steps performed by the cytochrome P450 monooxygenases cheE and cheG, as well as by the FAD-linked oxidoreductase cheF, lead to the formation of chaetoglobosin A. Depending on the order of action of these reductases, distinct intermediates can be identified. Within the pathway, the cytochrome P450 monooxygenase cheE catalyzes a stereospecific epoxidation on prochaetoglobosin I, cytoglobosin D, and chaetoglobosin J intermediates. The FAD-linked oxidoreductase cheF performs dehydrogenation of the C-20 hydroxyl groups in the 20-dihyrochaetoglobosin A and cytoglobosin D intermediates. Finally, the cytochrome P450 monooxygenase cheG can catalyze the stereospecific dihydroxylation of prochaetoglobosin I and prochaetoglobosin IV at C-19 and C-20, respectively. The Diels-Alderase cheD may play a role in the post-PKS-NRPS biosynthetic steps catalyzing Diels-Alder cyclization. The sequence is that of Cytochrome P450 monooxygenase cheG from Chaetomium globosum (strain ATCC 6205 / CBS 148.51 / DSM 1962 / NBRC 6347 / NRRL 1970) (Soil fungus).